Consider the following 75-residue polypeptide: Small ribosomal subunit protein eS17 (75 aa).

Belongs to the eukaryotic ribosomal protein eS17 family.

The chain is Small ribosomal subunit protein eS17 from Thermoplasma acidophilum (strain ATCC 25905 / DSM 1728 / JCM 9062 / NBRC 15155 / AMRC-C165).